The following is a 383-amino-acid chain: Embryonic pepsinogen (383 aa).

A signal peptide spans 1 to 16 (MRSLALLCAVLALSDG). The 305-residue stretch at 76–380 (YYGTISIGTP…DRANNRVGLA (305 aa)) folds into the Peptidase A1 domain. Residue Asp94 is part of the active site. A disulfide bond links Cys107 and Cys112. 2 N-linked (GlcNAc...) asparagine glycosylation sites follow: Asn132 and Asn204. Cys267 and Cys271 form a disulfide bridge. Residue Asp276 is part of the active site. The N-linked (GlcNAc...) asparagine glycan is linked to Asn309. A disulfide bridge connects residues Cys310 and Cys344. Asn350 carries an N-linked (GlcNAc...) asparagine glycan.

The protein belongs to the peptidase A1 family.

This Gallus gallus (Chicken) protein is Embryonic pepsinogen.